A 226-amino-acid polypeptide reads, in one-letter code: Ornithine decarboxylase antizyme (226 aa).

The protein belongs to the ODC antizyme family. In terms of assembly, interacts with ODC and thereby sterically blocks ODC homodimerization.

In terms of biological role, ornithine decarboxylase (ODC) antizyme protein that negatively regulates ODC activity and intracellular polyamine biosynthesis in response to increased intracellular polyamine levels. Binds to ODC monomers, inhibiting the assembly of the functional ODC homodimer, and targets the monomers for ubiquitin-independent proteolytic destruction by the 26S proteasome. In Schizosaccharomyces japonicus (Fission yeast), this protein is Ornithine decarboxylase antizyme (spa1).